The following is a 426-amino-acid chain: Serine--tRNA ligase (426 aa).

Residue 231–233 (TSE) participates in L-serine binding. Position 262–264 (262–264 (RSE)) interacts with ATP. An L-serine-binding site is contributed by Glu-285. 349–352 (EISS) provides a ligand contact to ATP. Ser-385 is an L-serine binding site.

This sequence belongs to the class-II aminoacyl-tRNA synthetase family. Type-1 seryl-tRNA synthetase subfamily. In terms of assembly, homodimer. The tRNA molecule binds across the dimer.

It is found in the cytoplasm. The enzyme catalyses tRNA(Ser) + L-serine + ATP = L-seryl-tRNA(Ser) + AMP + diphosphate + H(+). It catalyses the reaction tRNA(Sec) + L-serine + ATP = L-seryl-tRNA(Sec) + AMP + diphosphate + H(+). Its pathway is aminoacyl-tRNA biosynthesis; selenocysteinyl-tRNA(Sec) biosynthesis; L-seryl-tRNA(Sec) from L-serine and tRNA(Sec): step 1/1. Its function is as follows. Catalyzes the attachment of serine to tRNA(Ser). Is also able to aminoacylate tRNA(Sec) with serine, to form the misacylated tRNA L-seryl-tRNA(Sec), which will be further converted into selenocysteinyl-tRNA(Sec). This Legionella pneumophila subsp. pneumophila (strain Philadelphia 1 / ATCC 33152 / DSM 7513) protein is Serine--tRNA ligase.